The following is a 278-amino-acid chain: C-type lectin domain family 1 member A (278 aa).

The interval 1 to 42 is disordered; sequence MLAKYSSTRDMLDADGDTTMSLHSQASATSQRPELGHTEHQR. The Cytoplasmic segment spans residues 1 to 52; the sequence is MLAKYSSTRDMLDADGDTTMSLHSQASATSQRPELGHTEHQRPSSAWRPVAL. Over residues 18–32 the composition is skewed to polar residues; the sequence is TTMSLHSQASATSQR. Residues 53-73 traverse the membrane as a helical; Signal-anchor for type II membrane protein segment; it reads ILLTLCLVLLIGLAALGLVFF. Over 74–278 the chain is Extracellular; the sequence is QFYQLSNTQQ…LHEPLSRRWR (205 aa). 2 N-linked (GlcNAc...) asparagine glycosylation sites follow: asparagine 95 and asparagine 169. The 115-residue stretch at 144–258 folds into the C-type lectin domain; the sequence is HGDKCYQFYK…CRELRRCACE (115 aa). 2 cysteine pairs are disulfide-bonded: cysteine 165-cysteine 257 and cysteine 236-cysteine 249.

It is found in the membrane. This chain is C-type lectin domain family 1 member A (CLEC1A), found in Bos taurus (Bovine).